Here is a 103-residue protein sequence, read N- to C-terminus: uncharacterized protein (103 aa).

Residues 1-21 (MTGFKVSSFFYILALSRFFNA) form the signal peptide.

This is an uncharacterized protein from Saccharomyces cerevisiae (strain ATCC 204508 / S288c) (Baker's yeast).